The sequence spans 153 residues: Interleukin-4 (153 aa).

The first 24 residues, 1 to 24 (MGLTSQLLPPLFFLLACAGNFAHG), serve as a signal peptide directing secretion. Disulfide bonds link Cys27-Cys151, Cys48-Cys89, and Cys70-Cys123. Asn62 carries an N-linked (GlcNAc...) asparagine glycan. The N-linked (GlcNAc...) asparagine glycan is linked to Asn129.

The protein belongs to the IL-4/IL-13 family.

It localises to the secreted. In terms of biological role, participates in at least several B-cell activation processes as well as of other cell types. It is a costimulator of DNA-synthesis. It induces the expression of class II MHC molecules on resting B-cells. It enhances both secretion and cell surface expression of IgE and IgG1. It also regulates the expression of the low affinity Fc receptor for IgE (CD23) on both lymphocytes and monocytes. Positively regulates IL31RA expression in macrophages. Stimulates autophagy in dendritic cells by interfering with mTORC1 signaling and through the induction of RUFY4. The chain is Interleukin-4 (IL4) from Macaca mulatta (Rhesus macaque).